The primary structure comprises 211 residues: N-(5'-phosphoribosyl)anthranilate isomerase (211 aa).

This sequence belongs to the TrpF family.

The catalysed reaction is N-(5-phospho-beta-D-ribosyl)anthranilate = 1-(2-carboxyphenylamino)-1-deoxy-D-ribulose 5-phosphate. It participates in amino-acid biosynthesis; L-tryptophan biosynthesis; L-tryptophan from chorismate: step 3/5. The protein is N-(5'-phosphoribosyl)anthranilate isomerase of Methanococcus maripaludis (strain DSM 14266 / JCM 13030 / NBRC 101832 / S2 / LL).